The chain runs to 399 residues: Cell division protein FtsZ (399 aa).

GTP is bound by residues 30–34 (GGGSN), 117–119 (GTG), glutamate 148, lysine 152, and aspartate 196. Positions 349–368 (TLMSGNQNAPSGSYEQQDSS) are disordered. A compositionally biased stretch (polar residues) spans 351-368 (MSGNQNAPSGSYEQQDSS).

It belongs to the FtsZ family. As to quaternary structure, homodimer. Polymerizes to form a dynamic ring structure in a strictly GTP-dependent manner. Interacts directly with several other division proteins.

Its subcellular location is the cytoplasm. In terms of biological role, essential cell division protein that forms a contractile ring structure (Z ring) at the future cell division site. The regulation of the ring assembly controls the timing and the location of cell division. One of the functions of the FtsZ ring is to recruit other cell division proteins to the septum to produce a new cell wall between the dividing cells. Binds GTP and shows GTPase activity. This Borreliella burgdorferi (strain ATCC 35210 / DSM 4680 / CIP 102532 / B31) (Borrelia burgdorferi) protein is Cell division protein FtsZ.